The primary structure comprises 311 residues: Oxygen-dependent coproporphyrinogen-III oxidase (311 aa).

Ser93 is a substrate binding site. Residues His97 and His107 each contribute to the a divalent metal cation site. His107 functions as the Proton donor in the catalytic mechanism. Position 109–111 (109–111) interacts with substrate; it reads NVR. A divalent metal cation-binding residues include His153 and His184. Positions 252-287 are important for dimerization; it reads YVEFNLVFDRGTLFGLQSGGRTESILMSLPPVVKWR. 270–272 contacts substrate; sequence GGR.

It belongs to the aerobic coproporphyrinogen-III oxidase family. As to quaternary structure, homodimer. A divalent metal cation serves as cofactor.

The protein localises to the cytoplasm. It carries out the reaction coproporphyrinogen III + O2 + 2 H(+) = protoporphyrinogen IX + 2 CO2 + 2 H2O. It functions in the pathway porphyrin-containing compound metabolism; protoporphyrin-IX biosynthesis; protoporphyrinogen-IX from coproporphyrinogen-III (O2 route): step 1/1. Functionally, involved in the heme biosynthesis. Catalyzes the aerobic oxidative decarboxylation of propionate groups of rings A and B of coproporphyrinogen-III to yield the vinyl groups in protoporphyrinogen-IX. In Aromatoleum aromaticum (strain DSM 19018 / LMG 30748 / EbN1) (Azoarcus sp. (strain EbN1)), this protein is Oxygen-dependent coproporphyrinogen-III oxidase.